We begin with the raw amino-acid sequence, 370 residues long: Ubiquitin carboxyl-terminal hydrolase 12-B (370 aa).

The 331-residue stretch at 39-369 (FGLVNFGNTC…SGYILFYQSR (331 aa)) folds into the USP domain. Cysteine 48 serves as the catalytic Nucleophile. Positions 145-168 (KQEKQNGRIPNGNIDNENNNNTPD) are disordered. The span at 155–165 (NGNIDNENNNN) shows a compositional bias: low complexity. Zn(2+) contacts are provided by cysteine 186, cysteine 189, cysteine 233, and cysteine 236. Histidine 317 serves as the catalytic Proton acceptor.

Belongs to the peptidase C19 family. USP12/USP46 subfamily. Interacts with WDR48.

It catalyses the reaction Thiol-dependent hydrolysis of ester, thioester, amide, peptide and isopeptide bonds formed by the C-terminal Gly of ubiquitin (a 76-residue protein attached to proteins as an intracellular targeting signal).. In terms of biological role, deubiquitinating enzyme. Has almost no deubiquitinating activity by itself and requires the interaction with wdr48 to have a high activity. The sequence is that of Ubiquitin carboxyl-terminal hydrolase 12-B (usp12-b) from Xenopus laevis (African clawed frog).